The primary structure comprises 263 residues: Cytochrome c oxidase subunit 3 (263 aa).

7 consecutive transmembrane segments (helical) span residues 7 to 27, 44 to 64, 78 to 98, 120 to 140, 145 to 165, 191 to 211, and 241 to 261; these read ITVL…KAHL, FSVG…VYSI, GMLS…WGIL, LILT…CLQF, GMSL…ECFA, VTGL…IYFI, and ITIL…YFFY.

It belongs to the cytochrome c oxidase subunit 3 family. As to quaternary structure, component of the cytochrome c oxidase (complex IV, CIV), a multisubunit enzyme composed of a catalytic core of 3 subunits and several supernumerary subunits. The complex exists as a monomer or a dimer and forms supercomplexes (SCs) in the inner mitochondrial membrane with ubiquinol-cytochrome c oxidoreductase (cytochrome b-c1 complex, complex III, CIII).

It is found in the mitochondrion inner membrane. It carries out the reaction 4 Fe(II)-[cytochrome c] + O2 + 8 H(+)(in) = 4 Fe(III)-[cytochrome c] + 2 H2O + 4 H(+)(out). Functionally, component of the cytochrome c oxidase, the last enzyme in the mitochondrial electron transport chain which drives oxidative phosphorylation. The respiratory chain contains 3 multisubunit complexes succinate dehydrogenase (complex II, CII), ubiquinol-cytochrome c oxidoreductase (cytochrome b-c1 complex, complex III, CIII) and cytochrome c oxidase (complex IV, CIV), that cooperate to transfer electrons derived from NADH and succinate to molecular oxygen, creating an electrochemical gradient over the inner membrane that drives transmembrane transport and the ATP synthase. Cytochrome c oxidase is the component of the respiratory chain that catalyzes the reduction of oxygen to water. Electrons originating from reduced cytochrome c in the intermembrane space (IMS) are transferred via the dinuclear copper A center (CU(A)) of subunit 2 and heme A of subunit 1 to the active site in subunit 1, a binuclear center (BNC) formed by heme A3 and copper B (CU(B)). The BNC reduces molecular oxygen to 2 water molecules using 4 electrons from cytochrome c in the IMS and 4 protons from the mitochondrial matrix. In Plasmodium vivax, this protein is Cytochrome c oxidase subunit 3 (COIII).